Consider the following 273-residue polypeptide: 4-hydroxy-tetrahydrodipicolinate reductase (273 aa).

NAD(+) contacts are provided by residues 11–16 and Glu36; that span reads GAGGRM. NADP(+) is bound at residue Arg37. Residues 100–102 and 124–127 contribute to the NAD(+) site; these read GTT and AANY. Catalysis depends on His157, which acts as the Proton donor/acceptor. His158 contacts (S)-2,3,4,5-tetrahydrodipicolinate. Lys161 serves as the catalytic Proton donor. 167 to 168 provides a ligand contact to (S)-2,3,4,5-tetrahydrodipicolinate; sequence GT.

Belongs to the DapB family.

Its subcellular location is the cytoplasm. The catalysed reaction is (S)-2,3,4,5-tetrahydrodipicolinate + NAD(+) + H2O = (2S,4S)-4-hydroxy-2,3,4,5-tetrahydrodipicolinate + NADH + H(+). The enzyme catalyses (S)-2,3,4,5-tetrahydrodipicolinate + NADP(+) + H2O = (2S,4S)-4-hydroxy-2,3,4,5-tetrahydrodipicolinate + NADPH + H(+). Its pathway is amino-acid biosynthesis; L-lysine biosynthesis via DAP pathway; (S)-tetrahydrodipicolinate from L-aspartate: step 4/4. Its function is as follows. Catalyzes the conversion of 4-hydroxy-tetrahydrodipicolinate (HTPA) to tetrahydrodipicolinate. This chain is 4-hydroxy-tetrahydrodipicolinate reductase, found in Acinetobacter baylyi (strain ATCC 33305 / BD413 / ADP1).